Reading from the N-terminus, the 302-residue chain is 33 kDa chaperonin (302 aa).

Cystine bridges form between cysteine 247/cysteine 249 and cysteine 280/cysteine 283.

Belongs to the HSP33 family. Post-translationally, under oxidizing conditions two disulfide bonds are formed involving the reactive cysteines. Under reducing conditions zinc is bound to the reactive cysteines and the protein is inactive.

The protein resides in the cytoplasm. Functionally, redox regulated molecular chaperone. Protects both thermally unfolding and oxidatively damaged proteins from irreversible aggregation. Plays an important role in the bacterial defense system toward oxidative stress. This Prochlorococcus marinus (strain MIT 9301) protein is 33 kDa chaperonin.